A 291-amino-acid chain; its full sequence is MNSGYLHFPDFDPVIFSLGPVSLHWYGLMYLVGFVFAMWLAVRRANRPGSGWTKNEVENLLYAGFLGVFLGGRIGYVLFYNLPLFLENPLYLFRVWDGGMSFHGGLIGVICVMIWFAKRTKRNFFQVSDFIAPLIPFGLGAGRLGNFINGELWGRVDPGFPYAMLFPGSRSEDIGLLASHPEWQSLFNTYGVLPRHPSQLYELFLEGIVLFIILNLFIRKPRPMGAVSGLFLIGYGAFRIIVEFFRQPDAQFTGEWVQYISMGQILSIPMIVAGAAMMIWAYRRRPQQQLS.

7 helical membrane passes run 21–41, 60–80, 96–116, 130–150, 198–218, 225–245, and 260–280; these read VSLHWYGLMYLVGFVFAMWLA, LLYAGFLGVFLGGRIGYVLFY, WDGGMSFHGGLIGVICVMIWF, FIAPLIPFGLGAGRLGNFING, SQLYELFLEGIVLFIILNLFI, GAVSGLFLIGYGAFRIIVEFF, and ISMGQILSIPMIVAGAAMMIW. Residue R143 coordinates a 1,2-diacyl-sn-glycero-3-phospho-(1'-sn-glycerol).

It belongs to the Lgt family.

It is found in the cell inner membrane. It catalyses the reaction L-cysteinyl-[prolipoprotein] + a 1,2-diacyl-sn-glycero-3-phospho-(1'-sn-glycerol) = an S-1,2-diacyl-sn-glyceryl-L-cysteinyl-[prolipoprotein] + sn-glycerol 1-phosphate + H(+). It functions in the pathway protein modification; lipoprotein biosynthesis (diacylglyceryl transfer). Functionally, catalyzes the transfer of the diacylglyceryl group from phosphatidylglycerol to the sulfhydryl group of the N-terminal cysteine of a prolipoprotein, the first step in the formation of mature lipoproteins. In Cronobacter sakazakii (strain ATCC BAA-894) (Enterobacter sakazakii), this protein is Phosphatidylglycerol--prolipoprotein diacylglyceryl transferase.